Consider the following 263-residue polypeptide: Endonuclease 8 (263 aa).

Pro2 serves as the catalytic Schiff-base intermediate with DNA. The active-site Proton donor is the Glu3. The Proton donor; for beta-elimination activity role is filled by Lys53. The DNA site is built by Gln70, Arg125, and Asn169. The FPG-type zinc-finger motif lies at 229 to 263 (KVFHRDGERCERCGGVIEKTTLSSRPFYWCPGCQH). Residue Arg253 is the Proton donor; for delta-elimination activity of the active site.

It belongs to the FPG family. Requires Zn(2+) as cofactor.

The catalysed reaction is 2'-deoxyribonucleotide-(2'-deoxyribose 5'-phosphate)-2'-deoxyribonucleotide-DNA = a 3'-end 2'-deoxyribonucleotide-(2,3-dehydro-2,3-deoxyribose 5'-phosphate)-DNA + a 5'-end 5'-phospho-2'-deoxyribonucleoside-DNA + H(+). Functionally, involved in base excision repair of DNA damaged by oxidation or by mutagenic agents. Acts as a DNA glycosylase that recognizes and removes damaged bases. Has a preference for oxidized pyrimidines, such as thymine glycol, 5,6-dihydrouracil and 5,6-dihydrothymine. Has AP (apurinic/apyrimidinic) lyase activity and introduces nicks in the DNA strand. Cleaves the DNA backbone by beta-delta elimination to generate a single-strand break at the site of the removed base with both 3'- and 5'-phosphates. This chain is Endonuclease 8, found in Klebsiella pneumoniae (strain 342).